Reading from the N-terminus, the 665-residue chain is Chaperone protein dnaK1 (665 aa).

T198 is modified (phosphothreonine; by autocatalysis). A disordered region spans residues 634–665 (DDPWDNQMNSNSRNSRYGNSRDDDPWDNDYFL). The segment covering 642 to 651 (NSNSRNSRYG) has biased composition (low complexity).

This sequence belongs to the heat shock protein 70 family.

Acts as a chaperone. The chain is Chaperone protein dnaK1 (dnaK1) from Prochlorococcus marinus subsp. pastoris (strain CCMP1986 / NIES-2087 / MED4).